The following is a 279-amino-acid chain: Fatty acid metabolism regulator protein (279 aa).

An HTH gntR-type domain is found at 6–74 (KSPAGFAEKY…HGKPTKVNQF (69 aa)). A DNA-binding region (H-T-H motif) is located at residues 34 to 53 (ERELSELIGVTRTTLREVLQ).

As to quaternary structure, homodimer.

It localises to the cytoplasm. Its function is as follows. Multifunctional regulator of fatty acid metabolism. The polypeptide is Fatty acid metabolism regulator protein (Vibrio vulnificus (strain CMCP6)).